A 526-amino-acid polypeptide reads, in one-letter code: Peptide chain release factor 3 (526 aa).

Positions 9 to 277 constitute a tr-type G domain; it reads DKRRTFAIIS…GIVEWAPKPL (269 aa). GTP is bound by residues 18–25, 86–90, and 140–143; these read SHPDAGKT, DTPGH, and NKLD.

The protein belongs to the TRAFAC class translation factor GTPase superfamily. Classic translation factor GTPase family. PrfC subfamily.

The protein localises to the cytoplasm. Its function is as follows. Increases the formation of ribosomal termination complexes and stimulates activities of RF-1 and RF-2. It binds guanine nucleotides and has strong preference for UGA stop codons. It may interact directly with the ribosome. The stimulation of RF-1 and RF-2 is significantly reduced by GTP and GDP, but not by GMP. This Shewanella sp. (strain MR-4) protein is Peptide chain release factor 3.